We begin with the raw amino-acid sequence, 129 residues long: Integration host factor subunit alpha (129 aa).

Residues 87–129 (SALNGEAPPEDHAEIDAREEAAADAAEARGEDFDEEGMEDMEG) form a disordered region. Residues 95–117 (PEDHAEIDAREEAAADAAEARGE) show a composition bias toward basic and acidic residues. Over residues 118 to 129 (DFDEEGMEDMEG) the composition is skewed to acidic residues.

The protein belongs to the bacterial histone-like protein family. Heterodimer of an alpha and a beta chain.

Functionally, this protein is one of the two subunits of integration host factor, a specific DNA-binding protein that functions in genetic recombination as well as in transcriptional and translational control. It is necessary for normal cell growth and the production of carotenoids in response to light. The protein is Integration host factor subunit alpha (ihfA) of Myxococcus xanthus.